Here is a 618-residue protein sequence, read N- to C-terminus: Probable Xaa-Pro aminopeptidase P (618 aa).

Positions 415, 426, 524, and 538 each coordinate Mn(2+).

This sequence belongs to the peptidase M24B family. It depends on Mn(2+) as a cofactor.

The catalysed reaction is Release of any N-terminal amino acid, including proline, that is linked to proline, even from a dipeptide or tripeptide.. Functionally, catalyzes the removal of a penultimate prolyl residue from the N-termini of peptides. This is Probable Xaa-Pro aminopeptidase P (AMPP) from Pyricularia oryzae (strain 70-15 / ATCC MYA-4617 / FGSC 8958) (Rice blast fungus).